Reading from the N-terminus, the 146-residue chain is Arginine repressor (146 aa).

The protein belongs to the ArgR family.

The protein localises to the cytoplasm. It participates in amino-acid biosynthesis; L-arginine biosynthesis [regulation]. Its function is as follows. Regulates arginine biosynthesis genes. The chain is Arginine repressor from Parabacteroides distasonis (strain ATCC 8503 / DSM 20701 / CIP 104284 / JCM 5825 / NCTC 11152).